The sequence spans 202 residues: Recombination protein RecR (202 aa).

The C4-type zinc-finger motif lies at 61–76 (CARCNSFTEDEVCATC). The Toprim domain occupies 84–179 (GLLCIVETPA…KVTRLARGVP (96 aa)).

Belongs to the RecR family.

Functionally, may play a role in DNA repair. It seems to be involved in an RecBC-independent recombinational process of DNA repair. It may act with RecF and RecO. The protein is Recombination protein RecR of Bordetella pertussis (strain Tohama I / ATCC BAA-589 / NCTC 13251).